A 414-amino-acid chain; its full sequence is MLQLSISHIIVLSLLIRIGFFLFGLYQDKYMTVKYTDIDYVVFSDAANYVYNGYSPYSRETYRYTPLLAWMLIPNCWGGQWSNFGKYIFMISDLITGIIILKLLSGISIAGKKLSTNKIIMLSSIWLLNPMVITISTRGSSESVLTVMIMLSLYYLINKKSIIASGFWLGLSIHFKIYPVIYLPSIMLYLSTSGTPFIDVPIVRWVNRTNIKFLITTLITIGAFNGIMYSIYGYEFLYNSYLYHLIRIDHRHNFSVYNVALYYKSALSEIAEASLGFFTGNMEKFVMLPQLSISALILPLLFARRDLISCIFIQTFAFVTFNKVITSQYFIWFLIFLPHYLAQSKLYSNKHMMKGIVALLLWIVSQGSWLYFAYQLEFLGISTFDNGLLFSSFFFYISNCWILSVFIDDLNNDL.

A run of 10 helical transmembrane segments spans residues 6–26 (ISHIIVLSLLIRIGFFLFGLY), 87–107 (YIFMISDLITGIIILKLLSGI), 119–139 (IIMLSSIWLLNPMVITISTRG), 149–171 (IMLSLYYLINKKSIIASGFWLGL), 183–203 (LPSIMLYLSTSGTPFIDVPIV), 213–233 (FLITTLITIGAFNGIMYSIYG), 282–302 (MEKFVMLPQLSISALILPLLF), 316–336 (FAFVTFNKVITSQYFIWFLIF), 356–376 (IVALLLWIVSQGSWLYFAYQL), and 387–407 (GLLFSSFFFYISNCWILSVFI).

This sequence belongs to the PIGM family.

It is found in the endoplasmic reticulum membrane. It participates in glycolipid biosynthesis; glycosylphosphatidylinositol-anchor biosynthesis. Functionally, mannosyltransferase involved in glycosylphosphatidylinositol-anchor biosynthesis. Transfers the first alpha-1,4-mannose to GlcN-acyl-PI during GPI precursor assembly. Required for cell wall integrity. This is GPI mannosyltransferase 1 (GPI14) from Debaryomyces hansenii (strain ATCC 36239 / CBS 767 / BCRC 21394 / JCM 1990 / NBRC 0083 / IGC 2968) (Yeast).